The following is a 105-amino-acid chain: Replication restart protein PriB (105 aa).

The 102-residue stretch at 1–102 folds into the SSB domain; that stretch reads MTANRLVLTG…LHAEQIELID (102 aa).

The protein belongs to the PriB family. Homodimer. Interacts with PriA and DnaT. Component of the replication restart primosome. Primosome assembly occurs via a 'hand-off' mechanism. PriA binds to replication forks, subsequently PriB then DnaT bind; DnaT then displaces ssDNA to generate the helicase loading substrate.

Functionally, involved in the restart of stalled replication forks, which reloads the replicative helicase on sites other than the origin of replication; the PriA-PriB pathway is the major replication restart pathway. During primosome assembly it facilitates complex formation between PriA and DnaT on DNA; stabilizes PriA on DNA. Stimulates the DNA unwinding activity of PriA helicase. This Proteus mirabilis (strain HI4320) protein is Replication restart protein PriB.